Reading from the N-terminus, the 260-residue chain is Transforming acid coiled-coil-containing protein 1 (260 aa).

The segment at 1-43 (MSLNTTFTKEDGTEVVIPFNGSQNGHPENEEPEVEEAAEPSSS) is disordered. Positions 108–249 (ASSEELEKAL…CDQLLNDVDV (142 aa)) form a coiled coil.

This sequence belongs to the TACC family. In terms of assembly, interacts with zyg-9 to form a heterodimer. Interacts with zyg-8 to form a heterodimer. Interacts with efa-6 (via N-terminus). As to expression, expressed in touch neurons.

The protein localises to the cytoplasm. It is found in the cytoskeleton. It localises to the spindle pole. The protein resides in the microtubule organizing center. Its subcellular location is the centrosome. The protein localises to the chromosome. It is found in the centromere. It localises to the kinetochore. The protein resides in the cell projection. Its subcellular location is the axon. The protein localises to the perikaryon. Functionally, involved in microtubule formation, polymerization and assembly, regulating microtubule nucleation and length. Plays a role in pronuclear migration and mitotic and meiotic spindle elongation during early embryogenesis. In complex with zyg-9, functions during the early stages of embryonic development to regulate microtubule assembly throughout the cell cycle. Specifically, the complex is required for the formation and growth of astral microtubules and spindle microtubules during mitotic spindle assembly. At anaphase, the complex is required for mitotic spindle positioning in one-cell stage embryos. The complex acts in a partially redundant manner with the tac-1/zyg-8 complex to regulate microtubule assembly and processes during interphase, mitosis and meiosis in embryos. Plays a role in injury-induced axonal regrowth, regeneration and microtubule stability in PLM neurons and this may be downstream of efa-6. This is Transforming acid coiled-coil-containing protein 1 from Caenorhabditis elegans.